Consider the following 328-residue polypeptide: MPLHHLTRFPRLELIGAPTPLEYLPRLSDYLGREIYIKRDDVTPIAMGGNKLRKLEFLVADALREGADTLITAGAIQSNHVRQTAAVAAKLGLHCVALLENPIGTTAENYLTNGNRLLLDLFNTQIEMCDALTDPDAQLQTLATRIEAQGFRPYVIPVGGSSALGAMGYVESALEIAQQCEEVVGLSSVVVASGSAGTHAGLAVGLEHLMPDVELIGVTVSRAVAEQKPKVIALQQAIAGQLALTATADIHLWDDYFAPGYGVPNDAGMEAVKLLASLEGVLLDPVYTGKAMAGLIDGISQKRFNDDGPILFIHTGGAPALFAYHPHV.

At K51 the chain carries N6-(pyridoxal phosphate)lysine.

The protein belongs to the ACC deaminase/D-cysteine desulfhydrase family. As to quaternary structure, homodimer. The cofactor is pyridoxal 5'-phosphate.

It carries out the reaction D-cysteine + H2O = hydrogen sulfide + pyruvate + NH4(+) + H(+). Catalyzes the alpha,beta-elimination reaction of D-cysteine and of several D-cysteine derivatives. It could be a defense mechanism against D-cysteine. This chain is D-cysteine desulfhydrase, found in Salmonella schwarzengrund (strain CVM19633).